The sequence spans 244 residues: Glutathione S-transferase theta-2 (244 aa).

Positions 2–82 (GLELYLDLLS…YLSSKYQVAD (81 aa)) constitute a GST N-terminal domain. Residues 40–41 (HL), 53–54 (KV), 66–67 (ES), and 104–107 (DNIR) each bind glutathione. The GST C-terminal domain occupies 88-230 (DLQARAQVHE…AKKTLPVPPP (143 aa)).

It belongs to the GST superfamily. Theta family. In terms of assembly, homodimer. In terms of tissue distribution, highest values found in liver followed by testis, adrenal gland, kidney, lung, brain and skeletal muscle. In liver, highest expression found in central vein limiting plate hepatocytes. In lung, expressed mainly in club cells of the bronchiolar epithelium and, at low levels, in type II alveolar cells.

It localises to the cytoplasm. The protein localises to the cytosol. The protein resides in the nucleus. The enzyme catalyses RX + glutathione = an S-substituted glutathione + a halide anion + H(+). Its function is as follows. Catalyzes the inactivation of reactive sulfate esters in carcinogenic arylmethanols. Highest activity towards ethacrynic acid and cumene hydroperoxide. The polypeptide is Glutathione S-transferase theta-2 (Gstt2) (Rattus norvegicus (Rat)).